The primary structure comprises 285 residues: Glutamate racemase (285 aa).

Residues 28 to 29 (DS) and 60 to 61 (YG) each bind substrate. The Proton donor/acceptor role is filled by Cys92. 93–94 (NT) serves as a coordination point for substrate. The Proton donor/acceptor role is filled by Cys204. 205-206 (TH) contributes to the substrate binding site.

Belongs to the aspartate/glutamate racemases family.

It carries out the reaction L-glutamate = D-glutamate. The protein operates within cell wall biogenesis; peptidoglycan biosynthesis. Provides the (R)-glutamate required for cell wall biosynthesis. The chain is Glutamate racemase from Escherichia coli O9:H4 (strain HS).